Consider the following 200-residue polypeptide: Lipopolysaccharide core heptose(II)-phosphate phosphatase (200 aa).

Residues 1-25 form the signal peptide; that stretch reads MLAFCRSSLKSKKYFIILLALAAIA.

This sequence belongs to the phosphoglycerate mutase family. Ais subfamily.

Its subcellular location is the periplasm. The protein operates within bacterial outer membrane biogenesis; lipopolysaccharide metabolism. Catalyzes the dephosphorylation of heptose(II) of the outer membrane lipopolysaccharide core. The chain is Lipopolysaccharide core heptose(II)-phosphate phosphatase from Escherichia coli O17:K52:H18 (strain UMN026 / ExPEC).